Reading from the N-terminus, the 288-residue chain is Polyamine aminopropyltransferase (288 aa).

The region spanning 9–238 (ETLHDQFGQY…GIMTFAWATD (230 aa)) is the PABS domain. Glutamine 33 contributes to the S-methyl-5'-thioadenosine binding site. Spermidine contacts are provided by histidine 64 and aspartate 88. S-methyl-5'-thioadenosine contacts are provided by residues glutamate 108 and 140–141 (DG). The Proton acceptor role is filled by aspartate 158. 158 to 161 (DCTD) is a binding site for spermidine. Residue proline 165 participates in S-methyl-5'-thioadenosine binding.

Belongs to the spermidine/spermine synthase family. Homodimer or homotetramer.

Its subcellular location is the cytoplasm. The catalysed reaction is S-adenosyl 3-(methylsulfanyl)propylamine + putrescine = S-methyl-5'-thioadenosine + spermidine + H(+). The protein operates within amine and polyamine biosynthesis; spermidine biosynthesis; spermidine from putrescine: step 1/1. Catalyzes the irreversible transfer of a propylamine group from the amino donor S-adenosylmethioninamine (decarboxy-AdoMet) to putrescine (1,4-diaminobutane) to yield spermidine. This chain is Polyamine aminopropyltransferase, found in Escherichia coli (strain UTI89 / UPEC).